Here is a 258-residue protein sequence, read N- to C-terminus: Enterotoxin type G (258 aa).

Residues 1–25 form the signal peptide; sequence MKKLSTVIIILILEIVFHNMNYVNA. C116 and C133 are oxidised to a cystine.

This sequence belongs to the staphylococcal/streptococcal toxin family.

The protein resides in the secreted. Its function is as follows. Staphylococcal enterotoxins cause the intoxication staphylococcal food poisoning syndrome. The illness is characterized by high fever, hypotension, diarrhea, shock, and in some cases death. The sequence is that of Enterotoxin type G (entG) from Staphylococcus aureus (strain N315).